We begin with the raw amino-acid sequence, 79 residues long: Cytochrome b (79 aa).

Helical transmembrane passes span 1 to 7, 31 to 52, and 67 to 79; these read SALFLAM, WLIR…YLHI, and WNIG…LTMA. Heme b is bound by residues histidine 37 and histidine 51.

This sequence belongs to the cytochrome b family. The cytochrome bc1 complex contains 11 subunits: 3 respiratory subunits (MT-CYB, CYC1 and UQCRFS1), 2 core proteins (UQCRC1 and UQCRC2) and 6 low-molecular weight proteins (UQCRH/QCR6, UQCRB/QCR7, UQCRQ/QCR8, UQCR10/QCR9, UQCR11/QCR10 and a cleavage product of UQCRFS1). This cytochrome bc1 complex then forms a dimer. Heme b serves as cofactor.

The protein resides in the mitochondrion inner membrane. Functionally, component of the ubiquinol-cytochrome c reductase complex (complex III or cytochrome b-c1 complex) that is part of the mitochondrial respiratory chain. The b-c1 complex mediates electron transfer from ubiquinol to cytochrome c. Contributes to the generation of a proton gradient across the mitochondrial membrane that is then used for ATP synthesis. This is Cytochrome b (MT-CYB) from Dipodomys panamintinus (Panamint kangaroo rat).